The sequence spans 175 residues: CASP-like protein 2C1 (175 aa).

At 1–7 the chain is on the cytoplasmic side; sequence MVKLRET. A helical transmembrane segment spans residues 8–28; the sequence is EVILRLCIVFFLLLTSCLIGL. At 29–45 the chain is on the extracellular side; that stretch reads DSQTKEIAYIHKNVSFR. Asn41 carries N-linked (GlcNAc...) asparagine glycosylation. The chain crosses the membrane as a helical span at residues 46–66; it reads YLLALEAELYIDVVVAAYNLV. Over 67 to 91 the chain is Cytoplasmic; it reads QLGLGWYNVEQKTSNPKWFSYLLDQ. Residues 92 to 112 form a helical membrane-spanning segment; that stretch reads TAAYVVFAGTSAAAQHSLLVV. The Extracellular segment spans residues 113-136; that stretch reads TGSRELQWMKWCYKFTRFCFQMGS. A helical transmembrane segment spans residues 137–157; sequence AIILNYIAAALMVLLSSISAF. The Cytoplasmic segment spans residues 158 to 175; it reads NLFRLYSPKRFFRFKSSS.

This sequence belongs to the Casparian strip membrane proteins (CASP) family. In terms of assembly, homodimer and heterodimers.

The protein localises to the cell membrane. The sequence is that of CASP-like protein 2C1 from Arabidopsis thaliana (Mouse-ear cress).